We begin with the raw amino-acid sequence, 182 residues long: Probable tryptophan transport protein (182 aa).

The next 4 membrane-spanning stretches (helical) occupy residues 10 to 32 (ITINALLLAIGVILHQITPVLGL), 55 to 75 (ITMVSGTLMGIFTAMTTKFPG), 119 to 141 (IVLPLGTLVSGILFLGTAKIIVG), and 146 to 168 (FSILFLTVVVPSVALNTVIGLVL).

It belongs to the vitamin uptake transporter (VUT/ECF) (TC 2.A.88) family. TrpP subfamily.

Its subcellular location is the cell membrane. Its function is as follows. Probably involved in tryptophan uptake. This Clostridium perfringens (strain 13 / Type A) protein is Probable tryptophan transport protein (trpP).